We begin with the raw amino-acid sequence, 134 residues long: Probable glycine cleavage system H protein (134 aa).

A Lipoyl-binding domain is found at 29–110; it reads TVLVGITDYA…PYGAWIAKIK (82 aa). Lysine 70 is modified (N6-lipoyllysine).

This sequence belongs to the GcvH family. As to quaternary structure, the glycine cleavage system is composed of four proteins: P, T, L and H. (R)-lipoate is required as a cofactor.

The glycine cleavage system catalyzes the degradation of glycine. The H protein shuttles the methylamine group of glycine from the P protein to the T protein. In Pyrococcus abyssi (strain GE5 / Orsay), this protein is Probable glycine cleavage system H protein.